A 140-amino-acid chain; its full sequence is PDZ domain-containing protein 11 (140 aa).

The PDZ domain occupies 47–129; sequence IVTLKKPPGA…ISMRVRFFPY (83 aa).

As to quaternary structure, interacts with ATP2B1, ATP2B2, ATP2B3, ATP2B4 and ATP7A. Interacts with PLEKHA7 (via WW domains) at zonula adherens; this interaction is essential for the interaction between PLEKHA7 and the ADAM10-binding protein TSPAN33. Interacts with SLC5A6.

Its subcellular location is the cytoplasm. The protein localises to the cell junction. It is found in the adherens junction. It localises to the cell membrane. Its function is as follows. Mediates docking of ADAM10 to zonula adherens by interacting with PLEKHA7 which is required for PLEKHA7 to interact with the ADAM10-binding protein TSPAN33. The sequence is that of PDZ domain-containing protein 11 (Pdzd11) from Mus musculus (Mouse).